The chain runs to 298 residues: Ribosomal protein L11 methyltransferase (298 aa).

Thr-148, Gly-169, Asp-191, and Asn-233 together coordinate S-adenosyl-L-methionine.

The protein belongs to the methyltransferase superfamily. PrmA family.

It localises to the cytoplasm. It carries out the reaction L-lysyl-[protein] + 3 S-adenosyl-L-methionine = N(6),N(6),N(6)-trimethyl-L-lysyl-[protein] + 3 S-adenosyl-L-homocysteine + 3 H(+). Methylates ribosomal protein L11. This Marinobacter nauticus (strain ATCC 700491 / DSM 11845 / VT8) (Marinobacter aquaeolei) protein is Ribosomal protein L11 methyltransferase.